A 155-amino-acid polypeptide reads, in one-letter code: Protein FAM162A (155 aa).

The tract at residues 77-103 (RFKKEEEIPETISFEMLDAAKNKLRVK) is required for proapoptotic activity. A helical membrane pass occupies residues 104–121 (VSYLMIALTVAGCIYMVI).

Belongs to the UPF0389 family. Interacts with HSP90AB1; HSP90AB1 is essential for FAM162A mitochondrial localization and pro-apoptotic activity. Interacts with VDAC2; the interaction is probably involved in inducing mitochondrial permeability transition.

It is found in the mitochondrion membrane. Functionally, proposed to be involved in regulation of apoptosis; the exact mechanism may differ between cell types/tissues. May be involved in hypoxia-induced cell death of transformed cells implicating cytochrome C release and caspase activation (such as CASP9) and inducing mitochondrial permeability transition. May be involved in hypoxia-induced cell death of neuronal cells probably by promoting release of AIFM1 from mitochondria to cytoplasm and its translocation to the nucleus; however, the involvement of caspases has been reported conflictingly. The chain is Protein FAM162A (Fam162a) from Mus musculus (Mouse).